Consider the following 43-residue polypeptide: Protein PsbN (43 aa).

A helical transmembrane segment spans residues 4–24 (GILVVIFISCLLVSFTGYTIY).

Belongs to the PsbN family.

The protein localises to the plastid. It is found in the chloroplast thylakoid membrane. Functionally, may play a role in photosystem I and II biogenesis. This Chaetosphaeridium globosum (Charophycean green alga) protein is Protein PsbN.